The following is a 374-amino-acid chain: MKYLLPSAAAGLLLLAAQPTMAANTGGYATTDGGDVSGAVKKTARSLQEIVDIIEAAKKDSSGKVVKGGAFPLVITYNGNEDALIKAAEANICGQWSKDPRGVEIKEFTKGITILGTNGSSANFGIWVVNSSNVVVRNMRFGYMPGGAKDGDAIRIDNSPNVWIDHNEIFAKNFECAGTPDNDTTFESAVDIKKASTNVTVSYNFIHGVKKVGLSGSSNTDTGRNLTYHHNIYSDVNSRLPLQRGGQVHAYNNLYDGIKSSGFNVRQKGIALIESNWFENALNPVTARNDDSNFGTWELRNNNITSPSDFAKYKITWGKPSTPHINADDWKSTGKFPAVSYSYSPVSAQCVKDKLANYAGVGKNQAVLTAANCK.

The first 22 residues, Met1–Ala22, serve as a signal peptide directing secretion. A disulfide bond links Cys93 and Cys176. Positions 150, 152, 187, and 191 each coordinate Ca(2+). The active site involves Arg239. A disulfide bond links Cys350 and Cys373.

The protein belongs to the polysaccharide lyase 1 family. PLADES subfamily. Ca(2+) serves as cofactor.

Its subcellular location is the secreted. The enzyme catalyses Eliminative cleavage of (1-&gt;4)-alpha-D-galacturonan to give oligosaccharides with 4-deoxy-alpha-D-galact-4-enuronosyl groups at their non-reducing ends.. The protein operates within glycan metabolism; pectin degradation; 2-dehydro-3-deoxy-D-gluconate from pectin: step 2/5. Functionally, involved in maceration and soft-rotting of plant tissue. The chain is Pectate lyase 1 (pel1) from Pectobacterium atrosepticum (strain SCRI 1043 / ATCC BAA-672) (Erwinia carotovora subsp. atroseptica).